Here is a 282-residue protein sequence, read N- to C-terminus: Shikimate dehydrogenase (NADP(+)) (282 aa).

Residues 18–20 (SRS) and Thr-65 contribute to the shikimate site. Residue Lys-69 is the Proton acceptor of the active site. Residue Glu-81 participates in NADP(+) binding. Shikimate-binding residues include Asn-90 and Asp-105. Residues 130-134 (GAGGA), 154-159 (NRTPAR), and Met-222 contribute to the NADP(+) site. Tyr-224 contacts shikimate. Position 245 (Gly-245) interacts with NADP(+).

It belongs to the shikimate dehydrogenase family. In terms of assembly, homodimer.

The enzyme catalyses shikimate + NADP(+) = 3-dehydroshikimate + NADPH + H(+). The protein operates within metabolic intermediate biosynthesis; chorismate biosynthesis; chorismate from D-erythrose 4-phosphate and phosphoenolpyruvate: step 4/7. Functionally, involved in the biosynthesis of the chorismate, which leads to the biosynthesis of aromatic amino acids. Catalyzes the reversible NADPH linked reduction of 3-dehydroshikimate (DHSA) to yield shikimate (SA). In Acidovorax sp. (strain JS42), this protein is Shikimate dehydrogenase (NADP(+)).